A 172-amino-acid chain; its full sequence is MERAEKREFVTELNEVFKASGSVVVAHYAGSTVAQMNDFRSKMRAAGGTVKVAKNRLAKIALQGTEAEGMSNLFKGQTLIAYSNDPITAPKVVMDFAKTNDKIVVLGGAMGTTTLNAEAVKSLATLPSLDELRAKLLGMIQTPATRIVGVVAAPASQLARVFAAYAKKDEAA.

The protein belongs to the universal ribosomal protein uL10 family. In terms of assembly, part of the ribosomal stalk of the 50S ribosomal subunit. The N-terminus interacts with L11 and the large rRNA to form the base of the stalk. The C-terminus forms an elongated spine to which L12 dimers bind in a sequential fashion forming a multimeric L10(L12)X complex.

Functionally, forms part of the ribosomal stalk, playing a central role in the interaction of the ribosome with GTP-bound translation factors. The protein is Large ribosomal subunit protein uL10 of Rhizobium etli (strain CIAT 652).